The chain runs to 490 residues: 5'-3' exonuclease PLD3 (490 aa).

At 1 to 38 (MKPKLMYQELKVPAEEPANELPMNEIEAWKAAEKKARW) the chain is on the cytoplasmic side. The helical; Signal-anchor for type II membrane protein transmembrane segment at 39 to 59 (VLLVLILAVVGFGALMTQLFL) threads the bilayer. Topologically, residues 60–490 (WEYGDLHLFG…DSVGNACRLL (431 aa)) are lumenal. Disulfide bonds link C77/C239 and C81/C237. Residues N97 and N132 are each glycosylated (N-linked (GlcNAc...) asparagine). One can recognise a PLD phosphodiesterase 1 domain in the interval 196 to 223 (THGVLHTKFWVVDQTHFYLGSANMDWRS). Catalysis depends on residues H201, K203, and D208. H201 serves as the catalytic Proton donor. The phosphate site is built by H201 and K203. Residue N218 participates in phosphate binding. N-linked (GlcNAc...) asparagine glycosylation is found at N236, N284, and N387. C366 and C487 form a disulfide bridge. A PLD phosphodiesterase 2 domain is found at 411-437 (YARVNHNKYMVTERATYIGTSNWSGNY). H416 provides a ligand contact to phosphate. H416 (nucleophile) is an active-site residue. F438 lines the Mg(2+) pocket.

This sequence belongs to the phospholipase D family. As to quaternary structure, homodimer. Interacts with APP. In terms of processing, N-glycosylated. Proteolytically processed to a soluble form that is stable within endosomes and lysosomes. During transport through the secretory pathway becomes proteolysed by cysteine proteases, thereby releasing a stable soluble lysosomal lumenal polypeptide, whereas the transmembrane-bound fragment is rapidly degraded. Its transport route to lysosomes involves ubiquitination and the ESCRT complex. Post-translationally, ubiquitinated. Ubiquitination mediates sorting into lysosomes.

It localises to the endoplasmic reticulum membrane. The protein localises to the lysosome lumen. The protein resides in the early endosome membrane. It is found in the late endosome membrane. Its subcellular location is the golgi apparatus membrane. It localises to the endosome membrane. The enzyme catalyses Exonucleolytic cleavage in the 5'- to 3'-direction to yield nucleoside 3'-phosphates.. It carries out the reaction a 5'-end 5'-dephospho-ribonucleotidyl-ribonucleotide-RNA + H2O = a ribonucleoside 3'-phosphate + a 5'-end dephospho-ribonucleoside-RNA + H(+). It catalyses the reaction a ribonucleoside 3'-phosphate-2'-3'-cyclophospho-GMP + H2O = a ribonucleoside 3'-phosphate + 2',3'-cyclophospho-GMP + H(+). The catalysed reaction is a 5'-end 5'-dephospho-2'-deoxyribonucleotidyl-2'-deoxyribonucleotide in single-stranded DNA + H2O = a 5'-end dephospho-2'-deoxyribonucleoside in single-stranded DNA + a 2'-deoxyribonucleoside 3'-phosphate + H(+). The enzyme catalyses a 5'-end 5'-phospho-2'-deoxyribonucleotide in single-stranded DNA + H2O = a 5'-end 5'-dephospho-2'-deoxyribonucleotide in single-stranded DNA + phosphate. It carries out the reaction a 3-lyso-sn-glycero-1-phospho-(3'-acyl-1'-sn-glycerol) + a 1-acyl-sn-glycerol = a 3-acyl-sn-glycero-1-phospho-(3'-acyl-1'-sn-glycerol) + glycerol. It catalyses the reaction 3-lyso-sn-glycero-1-phospho-(3'-(9Z-octadecenoyl)-1'-sn-glycerol) + 1-(9Z-octadecenoyl)-sn-glycerol = 3-(9Z-octadecenoyl)-sn-glycero-1-phospho-(3'-(9Z-octadecenoyl)-1'-sn-glycerol) + glycerol. Its function is as follows. 5'-&gt;3' exonuclease that hydrolyzes the phosphodiester bond of single-stranded DNA (ssDNA) and RNA molecules to form nucleoside 3'-monophosphates and 5'-end 5'-hydroxy deoxyribonucleotide/ribonucleotide fragments. Partially redundant with PLD4, can cleave all four nucleotides displaying higher efficiency for ssDNA and RNA fragments initiated with uridine and guanosine residues and lower efficiency for cytidine-initiated substrates. As a result, it does not always degrade polynucleotides to the single nucleotide level, it can stall at specific sites sparing certain fragments from exonucleolytic degradation. Processes self and pathogenic ssDNA and RNA molecules that reach the endolysosomal compartment via phagocytosis or autophagy and may serve as 'danger' signals for recognition by innate immune receptors such as toll-like receptors (TLRs). Degrades mitochondrial CpG-rich ssDNA fragments to prevent TLR9 activation and autoinflammatory response, but it can cleave viral RNA to generate ligands for TLR7 activation and initiate antiviral immune responses. In plasmacytoid dendritic cells, it cooperates with endonuclease RNASET2 to release 2',3'-cyclic guanosine monophosphate (2',3'-cGMP), a potent stimulatory ligand for TLR7. Produces 2',3'-cGMPs and cytidine-rich RNA fragments that occupy TLR7 ligand-binding pockets and trigger a signaling-competent state. Can exert polynucleotide phosphatase activity toward 5'-phosphorylated ssDNA substrates although at a slow rate. Transphosphatidylase that catalyzes the exchange with R to S stereo-inversion of the glycerol moiety between (S,R)-lysophosphatidylglycerol (LPG) and monoacylglycerol (MAG) substrates to yield (S,S)-bis(monoacylglycero)phosphate (BMP). Can synthesize a variety of (S,S)-BMPs representing the main phospholipid constituent of lysosomal intralumenal vesicle (ILV) membranes that bind acid hydrolases for lipid degradation. Regulates the homeostasis and interorganellar communication of the endolysosomal system with an overall impact on cellular removal of dysfunctional organelles via autophagy as well as proper protein and lipid turnover. May play a role in myotube formation in response to ER stress. This Macaca fascicularis (Crab-eating macaque) protein is 5'-3' exonuclease PLD3 (PLD3).